A 105-amino-acid chain; its full sequence is Large ribosomal subunit protein uL24 (105 aa).

The protein belongs to the universal ribosomal protein uL24 family. In terms of assembly, part of the 50S ribosomal subunit.

Its function is as follows. One of two assembly initiator proteins, it binds directly to the 5'-end of the 23S rRNA, where it nucleates assembly of the 50S subunit. Functionally, one of the proteins that surrounds the polypeptide exit tunnel on the outside of the subunit. In Vibrio campbellii (strain ATCC BAA-1116), this protein is Large ribosomal subunit protein uL24.